The chain runs to 518 residues: Protein translocase subunit SecD (518 aa).

A run of 6 helical transmembrane segments spans residues 9 to 29 (IFLS…NFMQ), 361 to 381 (LIGF…LGLF), 384 to 404 (IALS…QATL), 406 to 426 (LPGI…NVLI), 452 to 474 (FATI…IFGV), and 486 to 506 (IGII…IDIW).

Belongs to the SecD/SecF family. SecD subfamily. Forms a complex with SecF. Part of the essential Sec protein translocation apparatus which comprises SecA, SecYEG and auxiliary proteins SecDF-YajC and YidC.

Its subcellular location is the cell inner membrane. In terms of biological role, part of the Sec protein translocase complex. Interacts with the SecYEG preprotein conducting channel. SecDF uses the proton motive force (PMF) to complete protein translocation after the ATP-dependent function of SecA. The sequence is that of Protein translocase subunit SecD from Rickettsia felis (strain ATCC VR-1525 / URRWXCal2) (Rickettsia azadi).